The primary structure comprises 273 residues: 4-hydroxy-tetrahydrodipicolinate reductase (273 aa).

Residue 12 to 17 (GAMGRM) coordinates NAD(+). Position 39 (Lys-39) interacts with NADP(+). Residues 102-104 (GTT) and 126-129 (ASNF) each bind NAD(+). Residue His-159 is the Proton donor/acceptor of the active site. His-160 contributes to the (S)-2,3,4,5-tetrahydrodipicolinate binding site. Lys-163 functions as the Proton donor in the catalytic mechanism. 169–170 (GT) is a binding site for (S)-2,3,4,5-tetrahydrodipicolinate.

Belongs to the DapB family. In terms of assembly, homotetramer.

The protein localises to the cytoplasm. The catalysed reaction is (S)-2,3,4,5-tetrahydrodipicolinate + NAD(+) + H2O = (2S,4S)-4-hydroxy-2,3,4,5-tetrahydrodipicolinate + NADH + H(+). It catalyses the reaction (S)-2,3,4,5-tetrahydrodipicolinate + NADP(+) + H2O = (2S,4S)-4-hydroxy-2,3,4,5-tetrahydrodipicolinate + NADPH + H(+). It functions in the pathway amino-acid biosynthesis; L-lysine biosynthesis via DAP pathway; (S)-tetrahydrodipicolinate from L-aspartate: step 4/4. Functionally, catalyzes the conversion of 4-hydroxy-tetrahydrodipicolinate (HTPA) to tetrahydrodipicolinate. The chain is 4-hydroxy-tetrahydrodipicolinate reductase from Buchnera aphidicola subsp. Schizaphis graminum (strain Sg).